The chain runs to 576 residues: Arginine--tRNA ligase (576 aa).

Positions 126–136 (ANPTGPMHIGH) match the 'HIGH' region motif.

Belongs to the class-I aminoacyl-tRNA synthetase family. As to quaternary structure, monomer.

The protein localises to the cytoplasm. The enzyme catalyses tRNA(Arg) + L-arginine + ATP = L-arginyl-tRNA(Arg) + AMP + diphosphate. The chain is Arginine--tRNA ligase from Rickettsia bellii (strain OSU 85-389).